Reading from the N-terminus, the 399-residue chain is uncharacterized protein (399 aa).

Helical transmembrane passes span 26-46 (LLTI…ISLG), 266-286 (VITI…AVGI), 301-321 (IGIL…FVVE), 324-344 (FLGL…AEVI), and 358-378 (AWIS…VGVI).

It belongs to the ABC-4 integral membrane protein family.

The protein localises to the cell membrane. This is an uncharacterized protein from Methanocaldococcus jannaschii (strain ATCC 43067 / DSM 2661 / JAL-1 / JCM 10045 / NBRC 100440) (Methanococcus jannaschii).